The following is a 61-amino-acid chain: Sec-independent protein translocase protein TatA (61 aa).

The helical transmembrane segment at 1–21 (MFGLGITEILLILGIIILIFG) threads the bilayer.

It belongs to the TatA/E family. As to quaternary structure, the Tat system comprises two distinct complexes: a TatABC complex, containing multiple copies of TatA, TatB and TatC subunits, and a separate TatA complex, containing only TatA subunits. Substrates initially bind to the TatABC complex, which probably triggers association of the separate TatA complex to form the active translocon.

It localises to the cell inner membrane. In terms of biological role, part of the twin-arginine translocation (Tat) system that transports large folded proteins containing a characteristic twin-arginine motif in their signal peptide across membranes. TatA could form the protein-conducting channel of the Tat system. This chain is Sec-independent protein translocase protein TatA, found in Maridesulfovibrio salexigens (strain ATCC 14822 / DSM 2638 / NCIMB 8403 / VKM B-1763) (Desulfovibrio salexigens).